Reading from the N-terminus, the 66-residue chain is MPKMKTHRGAAKRVKRTASGKLKRSRAFTSHLFANKSTKQKRKLRKASLVSKSDMKRVKQLLAYKK.

The span at 1–26 (MPKMKTHRGAAKRVKRTASGKLKRSR) shows a compositional bias: basic residues. The disordered stretch occupies residues 1–49 (MPKMKTHRGAAKRVKRTASGKLKRSRAFTSHLFANKSTKQKRKLRKASL).

The protein belongs to the bacterial ribosomal protein bL35 family.

The sequence is that of Large ribosomal subunit protein bL35 from Staphylococcus carnosus (strain TM300).